We begin with the raw amino-acid sequence, 424 residues long: Folate-like transporter 3 (424 aa).

An N-linked (GlcNAc...) asparagine glycan is attached at N35. Helical transmembrane passes span 55 to 75 (VALI…ILII), 78 to 98 (LSYF…CMQL), 101 to 119 (LFYG…YIYV), 136 to 156 (ALLV…GLNW), and 164 to 184 (IINL…PHVP). N254 carries an N-linked (GlcNAc...) asparagine glycan. 3 helical membrane passes run 313-333 (GLLF…CYII), 361-381 (LFGI…AIVI), and 392-412 (FVVY…IFGI).

This sequence belongs to the reduced folate carrier (RFC) transporter (TC 2.A.48) family.

It localises to the membrane. The chain is Folate-like transporter 3 (folt-3) from Caenorhabditis elegans.